The primary structure comprises 59 residues: Large ribosomal subunit protein uL30 (59 aa).

Belongs to the universal ribosomal protein uL30 family. In terms of assembly, part of the 50S ribosomal subunit.

This is Large ribosomal subunit protein uL30 from Leptospira interrogans serogroup Icterohaemorrhagiae serovar copenhageni (strain Fiocruz L1-130).